The following is a 333-amino-acid chain: Malate dehydrogenase (333 aa).

NAD(+)-binding positions include 10 to 15 (GGGQIG) and D34. Substrate is bound by residues R83 and R89. Residues N96 and 119 to 121 (ITN) contribute to the NAD(+) site. Substrate is bound by residues N121 and R152. The active-site Proton acceptor is the H176.

Belongs to the LDH/MDH superfamily. MDH type 3 family.

It carries out the reaction (S)-malate + NAD(+) = oxaloacetate + NADH + H(+). Functionally, catalyzes the reversible oxidation of malate to oxaloacetate. The protein is Malate dehydrogenase of Parvibaculum lavamentivorans (strain DS-1 / DSM 13023 / NCIMB 13966).